Reading from the N-terminus, the 1380-residue chain is Receptor-type adenylate cyclase A (1380 aa).

Topologically, residues 1 to 34 are cytoplasmic; it reads MAMQIRPSLGGCLRHGGAGDHAARRLSRLRAAKV. A helical membrane pass occupies residues 35 to 55; it reads FVPTAVVCVLLCCAPWVMAEI. Residues 56-891 lie on the Extracellular side of the membrane; the sequence is TNDAEREPVY…SHALTPAQRN (836 aa). Residues N422, N478, N497, and N567 are each glycosylated (N-linked (GlcNAc...) asparagine). The chain crosses the membrane as a helical span at residues 892 to 912; that stretch reads GLIAGCVVGAVVLIATCTLLL. The Cytoplasmic portion of the chain corresponds to 913 to 1380; it reads YCCMDNRNND…NPHYARHAFE (468 aa). One can recognise a Guanylate cyclase domain in the interval 933-1087; sequence TLLFTDIESS…DTSNMAARTE (155 aa). Mg(2+) contacts are provided by D938 and D981. Positions 1270-1298 are disordered; sequence LAREGDSAAGGVRPRLPGSPVTSLPAGGS.

It belongs to the adenylyl cyclase class-3 family. Requires Mg(2+) as cofactor.

The protein localises to the membrane. The enzyme catalyses ATP = 3',5'-cyclic AMP + diphosphate. Functionally, could act as a receptor for an unknown ligand. The chain is Receptor-type adenylate cyclase A (RAC-A) from Leishmania donovani.